The following is a 452-amino-acid chain: MALSIKEDFSSAFAKNESAVNSSTFNNNMKTWKIQKRFQILYVFFFLLITGALFYYLIDNVLFPKNKKINEIMNTSKHVIIGFSIENSHDRIMKTVKQHRLKNYIKESLKFFKTGLTQKPHLGNAGDSVTLNDVANVMYYGEAQIGDNKQKFAFIFDTGSANLWVPSAQCNTIGCKTKNLYDSNKSKTYEKDGTKVEMNYVSGTVSGFFSKDIVTIANLSFPYKFIEVTDTNGFEPAYTLGQFDGIVGLGWKDLSIGSVDPVVVELKNQNKIEQAVFTFYLPFDDKHKGYLTIGGIEDRFYEGQLTYEKLNHDLYWQVDLDLHFGNLTVEKATAIVDSGTSSITAPTEFLNKFFEGLDVVKIPFLPLYITTCNNPKLPTLEFRSATNVYTLEPEYYLQQIFDFGISLCMVSIIPVDLNKNTFILGDPFMRKYFTVFDYDNHTVGFALAKKKL.

Residues 1 to 37 (MALSIKEDFSSAFAKNESAVNSSTFNNNMKTWKIQKR) lie on the Cytoplasmic side of the membrane. Positions 1–123 (MALSIKEDFS…TGLTQKPHLG (123 aa)) are excised as a propeptide. A helical; Signal-anchor for type II membrane protein membrane pass occupies residues 38-58 (FQILYVFFFLLITGALFYYLI). At 59–452 (DNVLFPKNKK…VGFALAKKKL (394 aa)) the chain is on the lumenal side. Positions 139 to 446 (YYGEAQIGDN…DYDNHTVGFA (308 aa)) constitute a Peptidase A1 domain. Residue D157 is part of the active site. C170 and C175 are disulfide-bonded. Residue D337 is part of the active site. The cysteines at positions 372 and 408 are disulfide-linked.

This sequence belongs to the peptidase A1 family. In terms of processing, not N-glycosylated. Proteolytically cleaved into the soluble active mature form in the digestive vacuole by cysteine protease falcipains; the process begins at the early ring stage. Proteolysis requires an acidic environment.

The protein resides in the membrane. It is found in the vacuole lumen. Its subcellular location is the vacuole membrane. It catalyses the reaction Hydrolysis of the 33-Phe-|-Leu-34 bond in the alpha-chain of hemoglobin, leading to denaturation of molecule.. Inhibited by KNI derived compounds KNI-10333 and to a lesser extent KNI-10743. During the asexual blood stage, catalyzes the initial cleavage of native host hemoglobin (Hb) resulting in Hb denaturation; specifically cleaves between Phe-33 and Leu-34 of Hb alpha-chain. Digestion of host Hb is an essential step which provides the parasite with amino acids for protein synthesis, and regulates osmolarity. The sequence is that of Plasmepsin I from Plasmodium falciparum (isolate 3D7).